The chain runs to 236 residues: Eukaryotic translation initiation factor 3 subunit J (236 aa).

The segment at 1–65 (MADDWESAAD…APAKPKPNKA (65 aa)) is disordered. A compositionally biased stretch (acidic residues) spans 28–46 (GEDEDEDIKDSWEDEEEKK). The segment covering 47 to 58 (DEEKPTKTEAPA) has biased composition (basic and acidic residues).

This sequence belongs to the eIF-3 subunit J family. In terms of assembly, component of the eukaryotic translation initiation factor 3 (eIF-3) complex. The eIF-3 complex interacts with pix.

It localises to the cytoplasm. Component of the eukaryotic translation initiation factor 3 (eIF-3) complex, which is involved in protein synthesis of a specialized repertoire of mRNAs and, together with other initiation factors, stimulates binding of mRNA and methionyl-tRNAi to the 40S ribosome. The eIF-3 complex specifically targets and initiates translation of a subset of mRNAs involved in cell proliferation. This Drosophila melanogaster (Fruit fly) protein is Eukaryotic translation initiation factor 3 subunit J.